We begin with the raw amino-acid sequence, 101 residues long: Small ribosomal subunit protein uS10 (101 aa).

Belongs to the universal ribosomal protein uS10 family. As to quaternary structure, part of the 30S ribosomal subunit.

In terms of biological role, involved in the binding of tRNA to the ribosomes. This Mycoplasmopsis synoviae (strain 53) (Mycoplasma synoviae) protein is Small ribosomal subunit protein uS10.